The sequence spans 231 residues: 4-hydroxy-tetrahydrodipicolinate reductase (231 aa).

Residues aspartate 33, 68–70, and 92–95 each bind NAD(+); these read CTT and SSNT. The active-site Proton donor/acceptor is the histidine 124. A (S)-2,3,4,5-tetrahydrodipicolinate-binding site is contributed by histidine 125. The active-site Proton donor is the lysine 128. 134 to 135 lines the (S)-2,3,4,5-tetrahydrodipicolinate pocket; sequence GT.

The protein belongs to the DapB family.

The protein localises to the cytoplasm. It catalyses the reaction (S)-2,3,4,5-tetrahydrodipicolinate + NAD(+) + H2O = (2S,4S)-4-hydroxy-2,3,4,5-tetrahydrodipicolinate + NADH + H(+). The enzyme catalyses (S)-2,3,4,5-tetrahydrodipicolinate + NADP(+) + H2O = (2S,4S)-4-hydroxy-2,3,4,5-tetrahydrodipicolinate + NADPH + H(+). It functions in the pathway amino-acid biosynthesis; L-lysine biosynthesis via DAP pathway; (S)-tetrahydrodipicolinate from L-aspartate: step 4/4. In terms of biological role, catalyzes the conversion of 4-hydroxy-tetrahydrodipicolinate (HTPA) to tetrahydrodipicolinate. This Brachyspira hyodysenteriae (strain ATCC 49526 / WA1) protein is 4-hydroxy-tetrahydrodipicolinate reductase.